We begin with the raw amino-acid sequence, 519 residues long: Probable cytosol aminopeptidase (519 aa).

Residues K283 and D288 each coordinate Mn(2+). K295 is an active-site residue. Residues D306, D365, and E367 each contribute to the Mn(2+) site. The active site involves R369.

This sequence belongs to the peptidase M17 family. It depends on Mn(2+) as a cofactor.

The protein resides in the cytoplasm. The enzyme catalyses Release of an N-terminal amino acid, Xaa-|-Yaa-, in which Xaa is preferably Leu, but may be other amino acids including Pro although not Arg or Lys, and Yaa may be Pro. Amino acid amides and methyl esters are also readily hydrolyzed, but rates on arylamides are exceedingly low.. It catalyses the reaction Release of an N-terminal amino acid, preferentially leucine, but not glutamic or aspartic acids.. In terms of biological role, presumably involved in the processing and regular turnover of intracellular proteins. Catalyzes the removal of unsubstituted N-terminal amino acids from various peptides. This Mycobacterium ulcerans (strain Agy99) protein is Probable cytosol aminopeptidase.